The chain runs to 375 residues: Methylthioribose-1-phosphate isomerase (375 aa).

Asp-257 functions as the Proton donor in the catalytic mechanism.

The protein belongs to the eIF-2B alpha/beta/delta subunits family. MtnA subfamily.

Its subcellular location is the cytoplasm. The protein resides in the nucleus. It carries out the reaction 5-(methylsulfanyl)-alpha-D-ribose 1-phosphate = 5-(methylsulfanyl)-D-ribulose 1-phosphate. The protein operates within amino-acid biosynthesis; L-methionine biosynthesis via salvage pathway; L-methionine from S-methyl-5-thio-alpha-D-ribose 1-phosphate: step 1/6. Functionally, catalyzes the interconversion of methylthioribose-1-phosphate (MTR-1-P) into methylthioribulose-1-phosphate (MTRu-1-P). The protein is Methylthioribose-1-phosphate isomerase of Leishmania major.